A 1320-amino-acid chain; its full sequence is Probable inactive ATP-dependent zinc metalloprotease FTSHI 5, chloroplastic (1320 aa).

A chloroplast-targeting transit peptide spans 1–43 (MDFISASSLSSPFSTQLSPIYLSSGIVSLKPRHRVKNRNFGSR). Transmembrane regions (helical) follow at residues 571–591 (LYLK…WIPM), 633–653 (NIND…IIPY), and 695–715 (FQWF…LYHV). 824 to 831 (GERGTGKT) contacts ATP.

The protein in the N-terminal section; belongs to the AAA ATPase family. In the C-terminal section; belongs to the peptidase M41 family. In terms of assembly, oligomer.

The protein resides in the plastid. It localises to the chloroplast membrane. Its function is as follows. Required for plastid development during embryogenesis. Might be involved in chaperone functions or play a structural role in the thylakoid FtsH complex. This is Probable inactive ATP-dependent zinc metalloprotease FTSHI 5, chloroplastic from Arabidopsis thaliana (Mouse-ear cress).